Consider the following 290-residue polypeptide: ATP synthase gamma chain (290 aa).

Belongs to the ATPase gamma chain family. As to quaternary structure, F-type ATPases have 2 components, CF(1) - the catalytic core - and CF(0) - the membrane proton channel. CF(1) has five subunits: alpha(3), beta(3), gamma(1), delta(1), epsilon(1). CF(0) has three main subunits: a, b and c.

It localises to the cell inner membrane. Produces ATP from ADP in the presence of a proton gradient across the membrane. The gamma chain is believed to be important in regulating ATPase activity and the flow of protons through the CF(0) complex. The sequence is that of ATP synthase gamma chain from Dictyoglomus thermophilum (strain ATCC 35947 / DSM 3960 / H-6-12).